The following is a 347-amino-acid chain: Dihydroorotase (347 aa).

Histidine 17 and histidine 19 together coordinate Zn(2+). Residues 19 to 21 (HLR) and asparagine 45 contribute to the substrate site. Zn(2+)-binding residues include lysine 103, histidine 140, and histidine 178. Residue lysine 103 is modified to N6-carboxylysine. Histidine 140 is a substrate binding site. Residue leucine 223 participates in substrate binding. Position 251 (aspartate 251) interacts with Zn(2+). Aspartate 251 is a catalytic residue. Residues histidine 255 and alanine 267 each contribute to the substrate site.

It belongs to the metallo-dependent hydrolases superfamily. DHOase family. Class II DHOase subfamily. As to quaternary structure, homodimer. Zn(2+) serves as cofactor.

It catalyses the reaction (S)-dihydroorotate + H2O = N-carbamoyl-L-aspartate + H(+). It participates in pyrimidine metabolism; UMP biosynthesis via de novo pathway; (S)-dihydroorotate from bicarbonate: step 3/3. Functionally, catalyzes the reversible cyclization of carbamoyl aspartate to dihydroorotate. In Pectobacterium carotovorum subsp. carotovorum (strain PC1), this protein is Dihydroorotase.